The primary structure comprises 359 residues: Peptide chain release factor 1 (359 aa).

Residue Gln-236 is modified to N5-methylglutamine.

The protein belongs to the prokaryotic/mitochondrial release factor family. Methylated by PrmC. Methylation increases the termination efficiency of RF1.

It localises to the cytoplasm. Functionally, peptide chain release factor 1 directs the termination of translation in response to the peptide chain termination codons UAG and UAA. In Mycoplasma genitalium (strain ATCC 33530 / DSM 19775 / NCTC 10195 / G37) (Mycoplasmoides genitalium), this protein is Peptide chain release factor 1 (prfA).